Consider the following 530-residue polypeptide: GH3 domain-containing protein (530 aa).

Positions Met-1 to Ala-17 are cleaved as a signal peptide. Residues Leu-99–Asp-122 are disordered. N-linked (GlcNAc...) asparagine glycosylation is present at Asn-450. Gln-489 is subject to N5-methylglutamine.

This sequence belongs to the GH3 family. Post-translationally, methylated at Gln-489 by N6AMT1.

It localises to the endoplasmic reticulum. It is found in the nucleus envelope. The sequence is that of GH3 domain-containing protein (GHDC) from Homo sapiens (Human).